We begin with the raw amino-acid sequence, 143 residues long: Putative transcriptional regulatory protein PH0763 (143 aa).

This sequence belongs to the Tfx family.

Functionally, putative transcriptional regulator. The polypeptide is Putative transcriptional regulatory protein PH0763 (Pyrococcus horikoshii (strain ATCC 700860 / DSM 12428 / JCM 9974 / NBRC 100139 / OT-3)).